Reading from the N-terminus, the 177-residue chain is Endoribonuclease YbeY (177 aa).

Zn(2+)-binding residues include His-142, His-146, and His-152.

It belongs to the endoribonuclease YbeY family. The cofactor is Zn(2+).

The protein localises to the cytoplasm. Its function is as follows. Single strand-specific metallo-endoribonuclease involved in late-stage 70S ribosome quality control and in maturation of the 3' terminus of the 16S rRNA. The sequence is that of Endoribonuclease YbeY from Synechococcus sp. (strain CC9311).